Reading from the N-terminus, the 380-residue chain is Apelin receptor (380 aa).

Over 1–30 (MEEGGDFDNYYGADNQSECEYTDWKSSGAL) the chain is Extracellular. N-linked (GlcNAc...) asparagine glycosylation occurs at Asn-15. Intrachain disulfides connect Cys-19-Cys-281 and Cys-102-Cys-181. A helical transmembrane segment spans residues 31 to 54 (IPAIYMLVFLLGTTGNGLVLWTVF). The Cytoplasmic portion of the chain corresponds to 55–64 (RSSREKRRSA). A helical transmembrane segment spans residues 65–86 (DIFIASLAVADLTFVVTLPLWA). The Extracellular segment spans residues 87-99 (TYTYRDYDWPFGT). Residues 100-125 (FFCKLSSYLIFVNMYASVFCLTGLSF) traverse the membrane as a helical segment. Residues 126–146 (DRYLAIVRPVANARLRLRVSG) are Cytoplasmic-facing. The chain crosses the membrane as a helical span at residues 147-164 (AVATAVLWVLAALLAMPV). The Extracellular segment spans residues 165 to 198 (MVLRTTGDLENTTKVQCYMDYSMVATVSSEWAWE). Asn-175 carries an N-linked (GlcNAc...) asparagine glycan. Residues 199–223 (VGLGVSSTTVGFVVPFTIMLTCYFF) form a helical membrane-spanning segment. The Cytoplasmic segment spans residues 224–246 (IAQTIAGHFRKERIEGLRKRRRL). The helical transmembrane segment at 247 to 270 (LSIIVVLVVTFALCWMPYHLVKTL) threads the bilayer. The Extracellular segment spans residues 271–289 (YMLGSLLHWPCDFDLFLMN). A helical membrane pass occupies residues 290-312 (IFPYCTCISYVNSCLNPFLYAFF). Residues 313–380 (DPRFRQACTS…PYSQETLVVD (68 aa)) are Cytoplasmic-facing. The segment covering 342–351 (KSASYSSGHS) has biased composition (low complexity). Positions 342–380 (KSASYSSGHSQGPGPNMGKGGEQMHEKSIPYSQETLVVD) are disordered. Positions 371 to 380 (PYSQETLVVD) are enriched in polar residues.

The protein belongs to the G-protein coupled receptor 1 family. Homodimer; dimerization inhibits APLNR-mediated G protein and beta-arrestin signaling pathways compared to monomeric APLNR. As to expression, expressed in heart, brain, kidney, stomach, spleen, thymus, lung, ovary, small intestine and colon, adipose tissues and pancreas. Expressed in glial cells, astrocytes and neuronal subpopulations. Expressed in embryonic (ESCs) and induced (iPSCs) pluripotent stem cells.

Its subcellular location is the cell membrane. G protein-coupled receptor for peptide hormones apelin (APLN) and apelin receptor early endogenous ligand (APELA/ELA), that plays a role in the regulation of normal cardiovascular function and fluid homeostasis. When acting as apelin receptor, activates both G(i) protein pathway that inhibits adenylate cyclase activity, and the beta-arrestin pathway that promotes internalization of the receptor. APLNR/APJ also functions as mechanoreceptor that is activated by pathological stimuli in a G-protein-independent fashion to induce beta-arrestin signaling, hence eliciting cardiac hypertrophy. However, the presence of apelin ligand blunts cardiac hypertrophic induction from APLNR/APJ on response to pathological stimuli. Plays a key role in early development such as gastrulation, blood vessels formation and heart morphogenesis by acting as a APELA receptor. May promote angioblast migration toward the embryonic midline, i.e. the position of the future vessel formation, during vasculogenesis. Promotes sinus venosus (SV)-derived endothelial cells migration into the developing heart to promote coronary blood vessel development. Also plays a role in various processes in adults such as regulation of blood vessel formation, blood pressure, heart contractility and heart failure. Functionally, (Microbial infection) Alternative coreceptor with CD4 for HIV-1 infection; may be involved in the development of AIDS dementia. This is Apelin receptor from Homo sapiens (Human).